The sequence spans 90 residues: Putative toxin RelE1 (90 aa).

The protein belongs to the RelE toxin family.

In terms of biological role, toxic component of a type II toxin-antitoxin (TA) system. Its cognate antitoxin is RelB1 (Potential). The chain is Putative toxin RelE1 (relE1) from Methanocaldococcus jannaschii (strain ATCC 43067 / DSM 2661 / JAL-1 / JCM 10045 / NBRC 100440) (Methanococcus jannaschii).